A 174-amino-acid chain; its full sequence is Ly6/PLAUR domain-containing protein 6 (174 aa).

The N-terminal stretch at 1–22 (MEPWPLMAWGLMLTAITGWIKA) is a signal peptide. The UPAR/Ly6 domain occupies 47 to 141 (FKCFTCEDAP…PRNETDAIFS (95 aa)). 6 disulfides stabilise this stretch: cysteine 49-cysteine 77, cysteine 52-cysteine 61, cysteine 70-cysteine 96, cysteine 102-cysteine 121, cysteine 107-cysteine 118, and cysteine 122-cysteine 127. 2 N-linked (GlcNAc...) asparagine glycosylation sites follow: asparagine 134 and asparagine 147. Residue serine 149 is the site of GPI-anchor amidated serine attachment. Positions 150 to 174 (AQSTQTLPLLLLSVSITSLMLHSIN) are cleaved as a propeptide — removed in mature form.

In terms of assembly, interacts with fzd8 and lrp6.

The protein localises to the cell membrane. It is found in the membrane raft. Acts as an important regulator of embryogenesis through its enhancement of Wnt/beta-catenin signaling. Positively regulates Wnt/beta-catenin signaling by ensuring phosphorylation of lrp6 specifically in plasma membrane rafts and its subsequent internalization into signaling-competent vesicles. Essential for the wnt8-mediated patterning of the mesoderm and neuroectoderm during gastrulation. This is Ly6/PLAUR domain-containing protein 6 (lypd6) from Danio rerio (Zebrafish).